We begin with the raw amino-acid sequence, 797 residues long: MRSHLARNATTTTPNVYRRLHAAVGHHHGLLRPCSATALSARRCLFDCQHDVAHIPRDVALCTRTSKRTFISLFTPKPERFVKLPHFDPGYNVLLQYRKSEVEQERPPPRDQLVTAFKKLTKFKADTNRPLNPNQAFLLRTVLHYLLVTKPEADAPVDLKMSDLENAMDAALLPPKGSPEFHLALARLLHEEIMRRRLILLNPEERKVHLTKDDFARYIKALTQYGGSLEAAGRVKEFWQQLKDERSAVYFRGSGRIWIMVLEGLANEGREEELLQFWEEAQETGGIKYIPGVHQIFVTYYARQDKIEETKQWYSKPIHSGFSPTGETLLELVRSSRRSSQKWNEWLLPVFEQVVQDKFAKKGSLDAFLQWSVLALDKGPDGIKTYLQTMASGDFYQSHEVKVDATTINRLMQAAQEKGNPYMAERFWQLAQDFNIKANVHTYLNQMSYRLDANDIEGAHQIFSKLASGAVEVEFDEDLPVMNKYLRVLCAQQEPNIQHILTITSALEQRHAVLEPETIVALCLVFLNHDKKFDVIDTLSLHSVSISHIERQQIYKAFVDYICSPQTTTDRAWDAYSLLRQYFPETSVDDRVRLMESFFERKKPDMACLVFGHMRAHDDDNMHPTADIYVRCLEGLGRCPIPEQRPSDPASSLKMVHNMLKMDTRVEMNTRLYNALMLAYAAGGDPFTALDFWEEHITRSAEGPSYNSLAIVFWCCELIPLGDRYARPVWQKMLRMDLEVPQLGLTYNALPDPVSKDEFAAWAKEEYPEEWARLESKGQKETEFQGPVFNITRLFEA.

The transit peptide at 1 to 69 directs the protein to the mitochondrion; it reads MRSHLARNAT…ALCTRTSKRT (69 aa).

The protein localises to the mitochondrion. Chaperone protein involved in the assembly of the mitochondrial NADH:ubiquinone oxidoreductase complex (complex I). This Neurospora crassa (strain ATCC 24698 / 74-OR23-1A / CBS 708.71 / DSM 1257 / FGSC 987) protein is Complex I intermediate-associated protein 84, mitochondrial (cia84).